The primary structure comprises 435 residues: Xylose isomerase (435 aa).

Residues histidine 100 and aspartate 103 contribute to the active site. Residues glutamate 231, glutamate 267, histidine 270, aspartate 295, aspartate 306, aspartate 308, and aspartate 338 each contribute to the Mg(2+) site.

It belongs to the xylose isomerase family. As to quaternary structure, homotetramer. Mg(2+) serves as cofactor.

It localises to the cytoplasm. The catalysed reaction is alpha-D-xylose = alpha-D-xylulofuranose. This chain is Xylose isomerase, found in Brucella suis biovar 1 (strain 1330).